A 434-amino-acid polypeptide reads, in one-letter code: Serine hydroxymethyltransferase (434 aa).

Residues L133 and 137-139 (GHL) contribute to the (6S)-5,6,7,8-tetrahydrofolate site. K242 is subject to N6-(pyridoxal phosphate)lysine.

The protein belongs to the SHMT family. As to quaternary structure, homodimer. Pyridoxal 5'-phosphate is required as a cofactor.

The protein resides in the cytoplasm. The catalysed reaction is (6R)-5,10-methylene-5,6,7,8-tetrahydrofolate + glycine + H2O = (6S)-5,6,7,8-tetrahydrofolate + L-serine. It functions in the pathway one-carbon metabolism; tetrahydrofolate interconversion. It participates in amino-acid biosynthesis; glycine biosynthesis; glycine from L-serine: step 1/1. Catalyzes the reversible interconversion of serine and glycine with tetrahydrofolate (THF) serving as the one-carbon carrier. This reaction serves as the major source of one-carbon groups required for the biosynthesis of purines, thymidylate, methionine, and other important biomolecules. Also exhibits THF-independent aldolase activity toward beta-hydroxyamino acids, producing glycine and aldehydes, via a retro-aldol mechanism. The polypeptide is Serine hydroxymethyltransferase (Methylobacterium radiotolerans (strain ATCC 27329 / DSM 1819 / JCM 2831 / NBRC 15690 / NCIMB 10815 / 0-1)).